A 270-amino-acid polypeptide reads, in one-letter code: Phosphate import ATP-binding protein PstB 1 (270 aa).

Positions leucine 24–isoleucine 265 constitute an ABC transporter domain. Glycine 56–serine 63 is an ATP binding site.

This sequence belongs to the ABC transporter superfamily. Phosphate importer (TC 3.A.1.7) family. In terms of assembly, the complex is composed of two ATP-binding proteins (PstB), two transmembrane proteins (PstC and PstA) and a solute-binding protein (PstS).

It localises to the cell inner membrane. The catalysed reaction is phosphate(out) + ATP + H2O = ADP + 2 phosphate(in) + H(+). Its function is as follows. Part of the ABC transporter complex PstSACB involved in phosphate import. Responsible for energy coupling to the transport system. The sequence is that of Phosphate import ATP-binding protein PstB 1 from Yersinia pestis bv. Antiqua (strain Antiqua).